The chain runs to 348 residues: Mitogen-activated protein kinase kinase 5 (348 aa).

Disordered stretches follow at residues 1–26 and 35–54; these read MKPI…DLSL and LAVP…PASS. S6 bears the Phosphoserine; by ASK7 mark. Residues 70-325 enclose the Protein kinase domain; it reads LERVNRIGSG…AQQLLQHPFI (256 aa). ATP contacts are provided by residues 76-84 and K99; that span reads IGSGAGGTV. D187 functions as the Proton acceptor in the catalytic mechanism. Position 215 is a phosphothreonine (T215). S221 is modified (phosphoserine; by ASK7). S221 carries the post-translational modification Phosphoserine. T225 carries the post-translational modification Phosphothreonine; by ASK7. ADP-ribosylarginine; by HopF2 is present on R313.

The protein belongs to the protein kinase superfamily. STE Ser/Thr protein kinase family. MAP kinase kinase subfamily. As to quaternary structure, interacts with P.syringae type III effector HopF2. Interacts with BZR1. Interacts with MPK6 and MPK3. Interacts with RACK1A, RACK1B and RACK1C. Interacts with MAPKKK5 mainly in the cytosol. Binds to BASL. Interacts with MAPKKK20. In terms of processing, phosphorylation at Thr-215 and Ser-221 by MAP kinase kinase kinases positively regulates kinase activity. Phosphorylated by MAPKKK5 and MAPKKK20 in response to abscisic acid (ABA). ADP-ribosylation at Arg-313 by P.syringae type III effector HopF2 reduces the ability of the protein to phosphorylate downstream MPK6. As to expression, expressed higher in stems and leaves than in flowers and roots.

The catalysed reaction is L-seryl-[protein] + ATP = O-phospho-L-seryl-[protein] + ADP + H(+). The enzyme catalyses L-threonyl-[protein] + ATP = O-phospho-L-threonyl-[protein] + ADP + H(+). It catalyses the reaction L-tyrosyl-[protein] + ATP = O-phospho-L-tyrosyl-[protein] + ADP + H(+). Its activity is regulated as follows. Activated through serine and threonine phosphorylation by MEKK1 and MAPKKK20 in response to abscisic acid (ABA). Inhibited through phosphorylation by GSK3/Shaggy-like kinase ASKs. Inhibited through ADP-Ribosylation by P.syringae HopF2. Activated after high light stress. Its function is as follows. Mitogen-activated protein kinase kinase (MAPKK) which regulates abscisic acid (ABA) responses in a MAPKKK20-MKK5-MPK6 cascade involved in root growth (e.g. root cell division and elongation) and stomatal response, probably via MAPK6 activation by protein phosphorylation. Involved in the second phase of hydrogen peroxide generation during hypersensitive response-like cell death. Involved in the innate immune MAP kinase signaling cascade (MEKK1, MKK4/MKK5 and MPK3/MPK6) downstream of bacterial flagellin receptor FLS2. Activates by phosphorylation the downstream MPK3 and MPK6. YDA-MKK4/MKK5-MPK3/MPK6 module regulates stomatal cell fate before the guard mother cell (GMC) is specified. This MAPK cascade also functions downstream of the ER receptor in regulating coordinated local cell proliferation, which shapes the morphology of plant organs. MKK4 and MKK5 participate in the regulation of floral organ abscission. Target of the Pseudomonas syringae type III effector HopF2, that inhibits the activation of the downstream MPK6 and PAMP-triggered immunity. Plays a critical role in high light stress tolerance by the mediation of the Cu/Zn SODs CSD1 and CSD2 gene expression. Phosphorylates BZR1 in vitro. This Arabidopsis thaliana (Mouse-ear cress) protein is Mitogen-activated protein kinase kinase 5.